A 430-amino-acid chain; its full sequence is Adenylosuccinate synthetase (430 aa).

Residues 12-18 and 40-42 contribute to the GTP site; these read GDEGKGK and GHT. Asp-13 acts as the Proton acceptor in catalysis. Positions 13 and 40 each coordinate Mg(2+). IMP contacts are provided by residues 13 to 16, 38 to 41, Thr-128, Arg-142, Gln-223, Thr-238, and Arg-302; these read DEGK and NAGH. The Proton donor role is filled by His-41. 298 to 304 provides a ligand contact to substrate; sequence TTTGRPR. Residues Arg-304, 330-332, and 413-415 contribute to the GTP site; these read SID and SVG.

It belongs to the adenylosuccinate synthetase family. Homodimer. Requires Mg(2+) as cofactor.

The protein resides in the cytoplasm. It catalyses the reaction IMP + L-aspartate + GTP = N(6)-(1,2-dicarboxyethyl)-AMP + GDP + phosphate + 2 H(+). It functions in the pathway purine metabolism; AMP biosynthesis via de novo pathway; AMP from IMP: step 1/2. Its function is as follows. Plays an important role in the de novo pathway of purine nucleotide biosynthesis. Catalyzes the first committed step in the biosynthesis of AMP from IMP. In Lactococcus lactis subsp. cremoris (strain MG1363), this protein is Adenylosuccinate synthetase.